A 95-amino-acid chain; its full sequence is Co-chaperonin GroES (95 aa).

This sequence belongs to the GroES chaperonin family. As to quaternary structure, heptamer of 7 subunits arranged in a ring. Interacts with the chaperonin GroEL.

The protein resides in the cytoplasm. Its function is as follows. Together with the chaperonin GroEL, plays an essential role in assisting protein folding. The GroEL-GroES system forms a nano-cage that allows encapsulation of the non-native substrate proteins and provides a physical environment optimized to promote and accelerate protein folding. GroES binds to the apical surface of the GroEL ring, thereby capping the opening of the GroEL channel. This is Co-chaperonin GroES from Vesicomyosocius okutanii subsp. Calyptogena okutanii (strain HA).